We begin with the raw amino-acid sequence, 1377 residues long: DNA-directed RNA polymerase subunit beta' (1377 aa).

Cys60, Cys62, Cys75, and Cys78 together coordinate Zn(2+). Mg(2+) is bound by residues Asp449, Asp451, and Asp453. Residues Cys777, Cys851, Cys858, and Cys861 each coordinate Zn(2+).

Belongs to the RNA polymerase beta' chain family. The RNAP catalytic core consists of 2 alpha, 1 beta, 1 beta' and 1 omega subunit. When a sigma factor is associated with the core the holoenzyme is formed, which can initiate transcription. Mg(2+) serves as cofactor. Zn(2+) is required as a cofactor.

It carries out the reaction RNA(n) + a ribonucleoside 5'-triphosphate = RNA(n+1) + diphosphate. DNA-dependent RNA polymerase catalyzes the transcription of DNA into RNA using the four ribonucleoside triphosphates as substrates. This chain is DNA-directed RNA polymerase subunit beta', found in Borrelia recurrentis (strain A1).